Consider the following 427-residue polypeptide: MNNLEIFEESKKYMPGGVNSPVRCFKEMGMNPPVIKSGKGVIIRDEDGKEYIDFVLAWGPLLLGHCDEDVVKAIKETSENALAFGAPTKLELELSKFMCENLDNVEMIRMVNSGTEATMSAVKLARGYTGKSKIVKFAGCYHGHFDGFLIEAGSGVLTEGIPGSLGVPKESVENTLIGLYNDKVQIKELFKKYGNEIAAVIIEPVAGNMGVIKANEDFIKELRDLCDEYGALLIFDEVMTGFRVAFKGAQTLFDIKPDLITYAKIMGGGLPCGAYAGKKEIMEKLSPCGGVYQAGTMSGNPIVMAAGLATLTKLKNNTEFYDNVEKMGKKLQDGLIKISEENNLPLIVNRVGGMLTLFFTELEKVNTYEDVKTCDNERFKRYFKHMLNEGFNIAPSQFEAMFLSVKHTEEHIDKFLDAFKRFAINEK.

At K264 the chain carries N6-(pyridoxal phosphate)lysine.

It belongs to the class-III pyridoxal-phosphate-dependent aminotransferase family. HemL subfamily. In terms of assembly, homodimer. The cofactor is pyridoxal 5'-phosphate.

The protein resides in the cytoplasm. The catalysed reaction is (S)-4-amino-5-oxopentanoate = 5-aminolevulinate. Its pathway is porphyrin-containing compound metabolism; protoporphyrin-IX biosynthesis; 5-aminolevulinate from L-glutamyl-tRNA(Glu): step 2/2. This Clostridium botulinum (strain Alaska E43 / Type E3) protein is Glutamate-1-semialdehyde 2,1-aminomutase.